The chain runs to 407 residues: Imidazolonepropionase (407 aa).

2 residues coordinate Fe(3+): H68 and H70. Zn(2+)-binding residues include H68 and H70. 4-imidazolone-5-propanoate is bound by residues R77, Y140, and H173. Y140 is an N-formimidoyl-L-glutamate binding site. H238 is a binding site for Fe(3+). Zn(2+) is bound at residue H238. Q241 contributes to the 4-imidazolone-5-propanoate binding site. Residue D313 participates in Fe(3+) binding. D313 contacts Zn(2+). The N-formimidoyl-L-glutamate site is built by N315 and G317. Position 318 (T318) interacts with 4-imidazolone-5-propanoate.

It belongs to the metallo-dependent hydrolases superfamily. HutI family. Requires Zn(2+) as cofactor. Fe(3+) serves as cofactor.

It is found in the cytoplasm. It carries out the reaction 4-imidazolone-5-propanoate + H2O = N-formimidoyl-L-glutamate. It participates in amino-acid degradation; L-histidine degradation into L-glutamate; N-formimidoyl-L-glutamate from L-histidine: step 3/3. Functionally, catalyzes the hydrolytic cleavage of the carbon-nitrogen bond in imidazolone-5-propanoate to yield N-formimidoyl-L-glutamate. It is the third step in the universal histidine degradation pathway. This chain is Imidazolonepropionase, found in Burkholderia orbicola (strain MC0-3).